A 203-amino-acid chain; its full sequence is MEQIITEFISRFGYAAIFILILLENVLPIVPSEIILTFAGLMSVKSHLSILTLFIIATIASFIGLLILYYICRLISEERLYRFIDRHGKWIKLKSKDLKRANDWFKKYGVWAVFICRFIPVLRVLITIPAGVNRMNVVTFTVISLIGTTIWNFGLILLGRTLSDSFGMLMTGLHTYSRIMYVVIIIAVIYFAIRYIGKRKRVK.

5 consecutive transmembrane segments (helical) span residues 16-36 (AIFI…EIIL), 48-68 (LSIL…LLIL), 108-128 (YGVW…LITI), 137-157 (VVTF…GLIL), and 173-193 (LHTY…YFAI).

It belongs to the DedA family.

The protein localises to the cell membrane. In terms of biological role, flippase that catalyzes the transport of undecaprenyl phosphate (UndP) across the cytoplasmic membrane, from the external side to the cytoplasmic side. Is involved in UndP recycling during peptidoglycan synthesis. The sequence is that of Undecaprenyl phosphate transporter A from Staphylococcus aureus (strain NCTC 8325 / PS 47).